A 491-amino-acid chain; its full sequence is Zinc finger protein 655 (491 aa).

The interval 1–52 (MEEIPAQEAAGSPRVQFQSLETQSECLSPEPQFVQDTDMEQGLTGDGETREE) is disordered. Positions 15 to 26 (VQFQSLETQSEC) are enriched in polar residues. Gln60 is subject to Phosphoserine. Glycyl lysine isopeptide (Lys-Gly) (interchain with G-Cter in SUMO2) cross-links involve residues Lys77, Lys190, and Lys201. 6 C2H2-type zinc fingers span residues 212 to 234 (YKCD…QRIH), 240 to 262 (YKCK…KRIH), 303 to 325 (YKCS…QKIH), 330 to 353 (CKCT…RVHH), 380 to 402 (YTCS…QRIH), and 408 to 430 (HECN…HKMH).

Belongs to the krueppel C2H2-type zinc-finger protein family. Interacts with VAV1 and CDK4. Interacts with INTS13; promoting association with the integrator complex.

The protein resides in the nucleus. Probable transcription factor. In Homo sapiens (Human), this protein is Zinc finger protein 655.